Consider the following 145-residue polypeptide: Brain and acute leukemia cytoplasmic protein (145 aa).

Glycine 2 is lipidated: N-myristoyl glycine. Cysteine 3 is lipidated: S-palmitoyl cysteine. The segment at 3–35 (CGGSRADAIEPRYYESWTRETESTWLTYTDSDA) is interaction with CAMK2A. The disordered stretch occupies residues 27-120 (WLTYTDSDAP…KRDAKRTSAK (94 aa)). A compositionally biased stretch (polar residues) spans 83–106 (CGTQCPNPQSLGSGPLTQKQNGLR). Basic and acidic residues predominate over residues 108-119 (TEAKRDAKRTSA).

Interacts with CAMK2A. Post-translationally, palmitoylation and myristoylation target the protein to the lipid rafts. Expressed in the brain.

The protein resides in the cytoplasm. The protein localises to the synapse. It localises to the synaptosome. It is found in the membrane raft. Its subcellular location is the postsynaptic density. Its function is as follows. May play a synaptic role at the postsynaptic lipid rafts possibly through interaction with CAMK2A. In Sus scrofa (Pig), this protein is Brain and acute leukemia cytoplasmic protein (BAALC).